The sequence spans 1235 residues: DNA polymerase catalytic subunit (1235 aa).

Disordered stretches follow at residues 640-692 (QGRF…TAGR) and 1098-1134 (ATAPGDEPAPPAALPCPAKRPRETPSHADPPGGASKP). Positions 650–661 (APKRPAAAREDE) are enriched in basic and acidic residues. Residues 662-675 (ERPEEEGEDEDERE) are compositionally biased toward acidic residues. The span at 676-691 (EGGGEREPEGARETAG) shows a compositional bias: basic and acidic residues.

It belongs to the DNA polymerase type-B family. Forms a complex with the ssDNA-binding protein UL29, the DNA polymerase processivity factor, and the alkaline exonuclease. Interacts with the putative helicase-primase complex subunit UL8; this interaction may coordinate leading and lagging strand DNA synthesis at the replication fork.

It is found in the host nucleus. It carries out the reaction DNA(n) + a 2'-deoxyribonucleoside 5'-triphosphate = DNA(n+1) + diphosphate. The catalysed reaction is Endonucleolytic cleavage to 5'-phosphomonoester.. Replicates viral genomic DNA. The replication complex is composed of six viral proteins: the DNA polymerase, processivity factor, primase, primase-associated factor, helicase, and ssDNA-binding protein. Additionally, the polymerase contains an intrinsic ribonuclease H (RNase H) activity that specifically degrades RNA/DNA heteroduplexes or duplex DNA substrates in the 5' to 3' direction. Therefore, it can catalyze the excision of the RNA primers that initiate the synthesis of Okazaki fragments at a replication fork during viral DNA replication. This Human herpesvirus 1 (strain Angelotti) (HHV-1) protein is DNA polymerase catalytic subunit.